The primary structure comprises 242 residues: GLIPR1-like protein 1 (242 aa).

Positions 1–22 (MALKNKFSCLWILGLCLVATTS) are cleaved as a signal peptide. One can recognise an SCP domain in the interval 39–171 (EAHNEWRGKV…ASTAIFVCNY (133 aa)). Asparagine 119 carries an N-linked (GlcNAc...) asparagine glycan. Residue glycine 221 is the site of GPI-anchor amidated glycine attachment. Positions 222-242 (RAPQQTAFNPFSLGFLLLRIF) are cleaved as a propeptide — removed in mature form.

It belongs to the CRISP family. In terms of assembly, part of a oolemmal binding multimeric complex (IZUMO1 complex) composed at least of IZUMO1 and GLIPR1L1; the complex assemblage is influenced by the maturation status of the male germ cell. Interacts with IZUMO1. N-glycosylated. N-glycosylation decreases during the transit in the caput. As to expression, highly expressed in testis.

It localises to the cytoplasmic vesicle. It is found in the secretory vesicle. Its subcellular location is the acrosome. The protein resides in the cell membrane. The protein localises to the membrane raft. It localises to the secreted. Functionally, required for optimal fertilization at the stage of sperm-oocyte fusion, plays a role in optimizing acrosome function, the translocation of IZUMO1 during the acrosome reaction and the fertilization process. Component of epididymosomes, one type of membranous microvesicules which mediate the transfer of lipids and proteins to spermatozoa plasma membrane during epididymal maturation. Also component of the CD9-positive microvesicules found in the cauda region. The sequence is that of GLIPR1-like protein 1 (GLIPR1L1) from Homo sapiens (Human).